The following is a 142-amino-acid chain: ATP synthase F(0) complex subunit C3, mitochondrial (142 aa).

The N-terminal 67 residues, 1 to 67 (MFACAKLACT…REFQTSAISR (67 aa)), are a transit peptide targeting the mitochondrion. The helical transmembrane segment at 83 to 103 (VGVAGSGAGIGTVFGSLIIGY) threads the bilayer. K110 carries the post-translational modification N6,N6,N6-trimethyllysine. A helical membrane pass occupies residues 118–138 (ILGFALSEAMGLFCLMVAFLI).

The protein belongs to the ATPase C chain family. As to quaternary structure, F-type ATPases have 2 components, CF(1) - the catalytic core - and CF(0) - the membrane proton channel. CF(1) has five subunits: alpha(3), beta(3), gamma(1), delta(1), epsilon(1). CF(0) has three main subunits: a, b and c. Interacts with TMEM70 and TMEM242. Post-translationally, trimethylated by ATPSCKMT at Lys-110. Methylation is required for proper incorporation of the C subunit into the ATP synthase complex and mitochondrial respiration.

It localises to the mitochondrion membrane. Functionally, mitochondrial membrane ATP synthase (F(1)F(0) ATP synthase or Complex V) produces ATP from ADP in the presence of a proton gradient across the membrane which is generated by electron transport complexes of the respiratory chain. F-type ATPases consist of two structural domains, F(1) - containing the extramembraneous catalytic core and F(0) - containing the membrane proton channel, linked together by a central stalk and a peripheral stalk. During catalysis, ATP synthesis in the catalytic domain of F(1) is coupled via a rotary mechanism of the central stalk subunits to proton translocation. Part of the complex F(0) domain. A homomeric c-ring of probably 10 subunits is part of the complex rotary element. The sequence is that of ATP synthase F(0) complex subunit C3, mitochondrial from Homo sapiens (Human).